Reading from the N-terminus, the 91-residue chain is Small ribosomal subunit protein uS15 (91 aa).

Belongs to the universal ribosomal protein uS15 family. As to quaternary structure, part of the 30S ribosomal subunit. Forms a bridge to the 50S subunit in the 70S ribosome, contacting the 23S rRNA.

One of the primary rRNA binding proteins, it binds directly to 16S rRNA where it helps nucleate assembly of the platform of the 30S subunit by binding and bridging several RNA helices of the 16S rRNA. In terms of biological role, forms an intersubunit bridge (bridge B4) with the 23S rRNA of the 50S subunit in the ribosome. This is Small ribosomal subunit protein uS15 from Rickettsia bellii (strain OSU 85-389).